We begin with the raw amino-acid sequence, 600 residues long: Proton channel OTOP1 (600 aa).

A disordered region spans residues 1–50 (MPGGPGAPSSPAASSGSSRAAPSGIAACPLSPPPLARGSPQASGPRRGAS). Over 1–56 (MPGGPGAPSSPAASSGSSRAAPSGIAACPLSPPPLARGSPQASGPRRGASVPQKLA) the chain is Cytoplasmic. Residues 7–27 (APSSPAASSGSSRAAPSGIAA) show a composition bias toward low complexity. A helical transmembrane segment spans residues 57-78 (ETLSSQYGLNVFVAGLLFLLAW). Residues 79-86 (AVHATGVG) are Extracellular-facing. A helical transmembrane segment spans residues 87–110 (KSDLLCVLTALMLLQLLWMLWYVG). The Cytoplasmic segment spans residues 111 to 128 (RSYMQRRLIRPKDTHAGA). The chain crosses the membrane as a helical span at residues 129 to 151 (RWLRGSITLFAFITVVLGCLKVA). Residues 152 to 161 (YFIGFSECLS) are Extracellular-facing. A helical transmembrane segment spans residues 162 to 186 (ATEGVFPVTHAVHTLLQVYFLWGHA). The Cytoplasmic portion of the chain corresponds to 187–194 (KDIIMSFK). Residues 195-217 (TLERFGVIHSVFTNLLLWANSVL) form a helical membrane-spanning segment. Residues 218–262 (NESKHQLNEHKERLITLGFGNITIVLDDHTPQCNCTPPALCSALS) are Extracellular-facing. The helical transmembrane segment at 263–288 (HGIYYLYPFNIEYQILASTMLYVLWK) threads the bilayer. Residues 289–309 (NIGRRVDSSQHQKMQCRFDGV) are Cytoplasmic-facing. The chain crosses the membrane as a helical span at residues 310-332 (LVGSVLGLTVLAATIAVVVVYMI). Topologically, residues 333 to 342 (HIGRSKSKSE) are extracellular. Residues 343 to 368 (SALIMFYLYAITVLLLMGAAGLVGSW) traverse the membrane as a helical segment. Residues 369–386 (IYRVDEKSLDESKNPARK) lie on the Cytoplasmic side of the membrane. Residues 387-411 (LDVDLLVATGSGSWLLSWGSILAIA) traverse the membrane as a helical segment. At 412-421 (CAETRPPYTW) the chain is on the extracellular side. The chain crosses the membrane as a helical span at residues 422 to 442 (YNLPYSVLVIVEKYVQNIFII). Residues 443–532 (ESVHLEPEGV…QGGMKRRLLR (90 aa)) are Cytoplasmic-facing. Residues 533–551 (NITAFLFLCNISLWIPPAF) form a helical membrane-spanning segment. Topologically, residues 552–569 (GCRPEYDNGLEEIVFGFE) are extracellular. A helical membrane pass occupies residues 570 to 593 (PWIIVVNLAMPFSIFYRMHAAAAL). Over 594 to 600 (FEVYCKI) the chain is Cytoplasmic.

It belongs to the otopetrin family. Homodimer. Interacts with STAT1, independently of STAT1 phosphorylation status. Expressed in thymus, heart, kidney, skin, vestibular system of the inner ear, sour taste cells, heart, uterus, dorsal root ganglion, adrenal gland, lactating mammary gland and stimulated mast cells. In the inner ear, expressed in the supporting cells in extrastriolar regions of the saccule and in the utricle, but not in the cochlea. Expressed in brown adipose tissue. Expressed in epididymal white adipose tissue (eWAT), as well as in inguinal fat, in obese animals, but hardly detectable in eWAT from lean mice. Expressed in acid-sensing taste receptor cells (PKD2L1-positive cells), but not in other types of taste cells (at protein level).

Its subcellular location is the cell membrane. The protein resides in the cell projection. It localises to the microvillus. It catalyses the reaction H(+)(in) = H(+)(out). Activated by both acid and alkali, with proton influx in response to extracellular acid and proton efflux during alkali stimulation. Inhibited by Zn(2+); this inhibition is thought to be pH-sensitive. Currents evoked in response to mild acid (pH 6.0) stimulus may also be mildly potentiated by exposure to Zn(2+). Activated by NH(4)Cl. In terms of biological role, proton-selective ion channel. Biphasically modulated by acid and alkali, mediating proton influx and efflux in response to extracellular acid and base stimulation, respectively. Sour taste receptor, which carries inward currents in response to extracellular acidification. Sensor for ammonium chloride (NH(4)Cl) in taste receptor cells. NH(4)Cl acts by increasing the intracellular pH, thereby generating a driving force for proton entry through OTOP1 channel. Might also participate in alkaline sensation. Plays a role in the regulation of Ca(2+) flux in response to purigenic (ATP, ADP and UDP) stimuli, leading to increase in cytosolic Ca(2+) due to influx of extracellular calcium. May play this role by inhibiting P2Y purinoceptor-mediated Ca(2+) release in a Ca(2+)-dependent manner and promote an influx of Ca(2+) in response to ATP. Through this mechanism and possibly others, plays a role in the formation and function of calcium carbonate-based structures in the vestibular system of the inner ear, called otoconia, that sense gravity and linear acceleration. In obesity, may attenuate adipose tissue inflammation, through the negative regulation of IFNG signaling, hence may play an adaptive role in the maintainance of metabolic homeostasis. Following alkali activation, may also be permeable Na(+), K(+), Cs(+) and Li(+). This is Proton channel OTOP1 from Mus musculus (Mouse).